Consider the following 391-residue polypeptide: 3-ketoacyl-CoA thiolase (391 aa).

Cysteine 95 (acyl-thioester intermediate) is an active-site residue. Residues histidine 347 and cysteine 377 each act as proton acceptor in the active site.

This sequence belongs to the thiolase-like superfamily. Thiolase family. In terms of assembly, heterotetramer of two alpha chains (FadB) and two beta chains (FadA).

The protein localises to the cytoplasm. The enzyme catalyses an acyl-CoA + acetyl-CoA = a 3-oxoacyl-CoA + CoA. Its pathway is lipid metabolism; fatty acid beta-oxidation. Catalyzes the final step of fatty acid oxidation in which acetyl-CoA is released and the CoA ester of a fatty acid two carbons shorter is formed. The protein is 3-ketoacyl-CoA thiolase of Pseudomonas fluorescens (strain Pf0-1).